Reading from the N-terminus, the 175-residue chain is Adenine phosphoribosyltransferase (175 aa).

The protein belongs to the purine/pyrimidine phosphoribosyltransferase family. Homodimer.

The protein resides in the cytoplasm. The enzyme catalyses AMP + diphosphate = 5-phospho-alpha-D-ribose 1-diphosphate + adenine. Its pathway is purine metabolism; AMP biosynthesis via salvage pathway; AMP from adenine: step 1/1. Its function is as follows. Catalyzes a salvage reaction resulting in the formation of AMP, that is energically less costly than de novo synthesis. The polypeptide is Adenine phosphoribosyltransferase (Thermosipho melanesiensis (strain DSM 12029 / CIP 104789 / BI429)).